Here is a 1047-residue protein sequence, read N- to C-terminus: MAEKRPLRTLGPVMYGKLPRLETDSGLEHSLPHSVGNQDPCTYKGSYFSCPMAGTPKAESEQLASWTPYPPLYSTGMAGPPLQADNLLTNCLFYRSPAEGPEKMQDSSPVELLPFSPQAHSYPGPPLAAPKPVYRNPLCYGLSTCLGEGAVKRPLDVDWTLATGPLLPSADPPCSLAPAPSKGQTLDGTFLRGVPAEGSSKDSSGSFSPCQPFLEKYQTIHSTGFLASRYTGPYPRNSKQAMSEGPSSPWTQLAQPLGPPCQDTGPTHYPPPHHPPPHPPQALPCPPACRHPEKQGSYSPALPLQPLGGHKGTGYQAGGLGSPYLRQQAAQAPYIPPLGLDAYPYPSAPLPAPSPGLKLEPPLTPRCPLDFAPQTLSFPYARDDLSLYGASPGLGGTPPSQNNVRAVPQPGAFQRACQPLPASQPCSEPVRPAQEAEEKTWLPSCRKEKLQPRLSEHSGPPIVIRDSPVPCTPPALPPCARECQSLPQKEGARPPSSPPMPVIDNVFSLAPYRDYLDVPAPEATTEPDSATAEPDSAPATSEGQDKGCRGTLPAQEGPSGSKPLRGSLKEEVALDLSVRKPTAEASPVKASRSVEHAKPTAAMDVPDVGNMVSDLPGLKKIDTEAPGLPGVPVTTDAMPRTNFHSSVAFMFRKFKILRPAPLPAAVVPSTPTSAPAPTQPAPTPTSGPIGLRILAQQPLSVTCFSLALPSPPAVAVASPAPAPAPSPAPARAQAPASARDPAPAPAPVAGPAPASTSAPGDSLEQHFTGLHASLCDAISGSVAHSPPEKLREWLETAGPWGQAAWQDCQGVQGLLAKLLSQLQRFDRTHRCPFPHVVRAGAIFVPIHLVKERLFPRLPPASVDHVLQEHRVELRPTTLSEERALRELALPGCTSRMLKLLALRQLPDIYPDLLGLQWRDCVRRQLGDFDTEAGAVSSSEPTVARGEPESLALAQKSPAPKVRKPGRKPPTPGPEKAEAAAGEESCGASPTPATSASPPGPTLKARFRSLLETAWLNGLALPTWGHKSSRPDQPSPCPQLLDSQSHHL.

The residue at position 17 (Lys17) is an N6-acetyllysine. 2 disordered regions span residues 172–208 (PPCS…GSFS) and 236–283 (RNSK…PQAL). Ser208 bears the Phosphoserine mark. The span at 237–254 (NSKQAMSEGPSSPWTQLA) shows a compositional bias: polar residues. The span at 268–283 (HYPPPHHPPPHPPQAL) shows a compositional bias: pro residues. Phosphoserine is present on residues Ser299 and Ser391. Thr397 bears the Phosphothreonine mark. Disordered stretches follow at residues 448 to 469 (EKLQ…DSPV), 482 to 504 (ECQS…PVID), 519 to 567 (PAPE…LRGS), 668 to 690 (PSTP…GPIG), 714 to 763 (VAVA…GDSL), 931 to 1004 (EAGA…TLKA), and 1021 to 1047 (PTWG…SHHL). Residues Ser455, Ser496, and Ser497 each carry the phosphoserine modification. Low complexity-rich tracts occupy residues 729 to 741 (PARA…ARDP) and 751 to 762 (PAPASTSAPGDS). Phosphoserine occurs at positions 936, 956, 988, and 996. Residues 978 to 996 (AAAGEESCGASPTPATSAS) are compositionally biased toward low complexity.

This is an uncharacterized protein from Homo sapiens (Human).